Here is a 183-residue protein sequence, read N- to C-terminus: MDLSSWFEFTMYDAVFLVVVLGFFFYWLTRSEQPLPAPPKELAPLPMSDMTVEELRKYDGVKNEHILFGLNGTIYDVTRGKGFYGPGKAYGTLAGHDATRALGTMDQNAVSSEWDDHTGISADEQETANEWETQFKFKYLTVGRLVKNSSEKADYGNRKSFVRGAESLDSIINGGDEGTKKDN.

Residues 9 to 29 (FTMYDAVFLVVVLGFFFYWLT) traverse the membrane as a helical segment. A Cytochrome b5 heme-binding domain is found at 47–146 (MSDMTVEELR…FKYLTVGRLV (100 aa)).

It belongs to the cytochrome b5 family. MAPR subfamily. Interacts with unc-40 (via cytoplasmic domain). As to expression, expressed in the AVG pioneer midline neuron and in several nerve ring neurons that extend projecting axons into the right ventral nerve cord.

It localises to the membrane. The protein resides in the cell projection. The protein localises to the axon. Functionally, transmembrane protein required for the axon guidance of a subset of ventral nerve cord-associated interneurons and motor neurons. May function with the netrin receptor unc-40 in axon guidance. This Caenorhabditis elegans protein is Protein vem-1.